A 387-amino-acid chain; its full sequence is Phosphoglycerate kinase (387 aa).

Substrate-binding positions include Asp-21 to Asn-23, Arg-36, His-59 to Arg-62, Arg-113, and Arg-146. ATP-binding positions include Lys-197, Glu-314, and Gly-340–Thr-343.

The protein belongs to the phosphoglycerate kinase family. Monomer.

The protein resides in the cytoplasm. The enzyme catalyses (2R)-3-phosphoglycerate + ATP = (2R)-3-phospho-glyceroyl phosphate + ADP. It functions in the pathway carbohydrate degradation; glycolysis; pyruvate from D-glyceraldehyde 3-phosphate: step 2/5. The sequence is that of Phosphoglycerate kinase from Aliivibrio fischeri (strain ATCC 700601 / ES114) (Vibrio fischeri).